Reading from the N-terminus, the 258-residue chain is Hydroxyacylglutathione hydrolase (258 aa).

Residues His55, His57, Asp59, His60, His115, Asp132, and His170 each coordinate Zn(2+).

Belongs to the metallo-beta-lactamase superfamily. Glyoxalase II family. As to quaternary structure, monomer. Requires Zn(2+) as cofactor.

It catalyses the reaction an S-(2-hydroxyacyl)glutathione + H2O = a 2-hydroxy carboxylate + glutathione + H(+). The protein operates within secondary metabolite metabolism; methylglyoxal degradation; (R)-lactate from methylglyoxal: step 2/2. Functionally, thiolesterase that catalyzes the hydrolysis of S-D-lactoyl-glutathione to form glutathione and D-lactic acid. The protein is Hydroxyacylglutathione hydrolase of Shewanella halifaxensis (strain HAW-EB4).